Here is a 434-residue protein sequence, read N- to C-terminus: Histidinol dehydrogenase (434 aa).

NAD(+) is bound by residues Tyr130, Gln191, and Asn214. The substrate site is built by Ser237, Gln259, and His262. Zn(2+) is bound by residues Gln259 and His262. Active-site proton acceptor residues include Glu327 and His328. Substrate is bound by residues His328, Asp361, Glu415, and His420. Asp361 is a Zn(2+) binding site. A Zn(2+)-binding site is contributed by His420.

The protein belongs to the histidinol dehydrogenase family. Zn(2+) serves as cofactor.

The catalysed reaction is L-histidinol + 2 NAD(+) + H2O = L-histidine + 2 NADH + 3 H(+). It participates in amino-acid biosynthesis; L-histidine biosynthesis; L-histidine from 5-phospho-alpha-D-ribose 1-diphosphate: step 9/9. Its function is as follows. Catalyzes the sequential NAD-dependent oxidations of L-histidinol to L-histidinaldehyde and then to L-histidine. This chain is Histidinol dehydrogenase, found in Cereibacter sphaeroides (strain ATCC 17023 / DSM 158 / JCM 6121 / CCUG 31486 / LMG 2827 / NBRC 12203 / NCIMB 8253 / ATH 2.4.1.) (Rhodobacter sphaeroides).